A 124-amino-acid chain; its full sequence is Heat-labile enterotoxin B chain (124 aa).

Positions 1–21 (MNKVKCYVLFTALLSSLYAHG) are cleaved as a signal peptide. Cysteine 30 and cysteine 107 form a disulfide bridge.

Heterohexamer of one A chain and of five B chains.

In terms of biological role, the biological activity of the toxin is produced by the A chain, which activates intracellular adenyl cyclase. The sequence is that of Heat-labile enterotoxin B chain (eltB) from Escherichia coli.